A 152-amino-acid chain; its full sequence is MDNEELQQLVCRISLESFQKPFIHQAYFNGRLRSTGGRYLLQSHNIEINPKAFELYGIKEIQGIVLHELCHYHLHIEGKGYQHRDKEFRELLKKVKAPRFCSALHTSKPSIKKQRRYTYTCVNCQQLYIRKIKMNVEKYCCSKCLGKLELLK.

A SprT-like domain is found at 6-151 (LQQLVCRISL…SKCLGKLELL (146 aa)). Residue His67 participates in Zn(2+) binding. Glu68 is an active-site residue. A Zn(2+)-binding site is contributed by His71.

Belongs to the SprT family. It depends on Zn(2+) as a cofactor.

The protein localises to the cytoplasm. The protein is Protein SprT-like of Lysinibacillus sphaericus (strain C3-41).